A 548-amino-acid chain; its full sequence is Chaperonin GroEL (548 aa).

ATP is bound by residues 30–33 (TLGP), Lys51, 87–91 (DGTTT), Gly415, 479–481 (NAA), and Asp495. The disordered stretch occupies residues 526-548 (REDKSSDVASSPAGGMGGMGGMM). The span at 539-548 (GGMGGMGGMM) shows a compositional bias: gly residues.

The protein belongs to the chaperonin (HSP60) family. In terms of assembly, forms a cylinder of 14 subunits composed of two heptameric rings stacked back-to-back. Interacts with the co-chaperonin GroES.

It is found in the cytoplasm. The enzyme catalyses ATP + H2O + a folded polypeptide = ADP + phosphate + an unfolded polypeptide.. In terms of biological role, together with its co-chaperonin GroES, plays an essential role in assisting protein folding. The GroEL-GroES system forms a nano-cage that allows encapsulation of the non-native substrate proteins and provides a physical environment optimized to promote and accelerate protein folding. The polypeptide is Chaperonin GroEL (Buchnera aphidicola subsp. Schizaphis graminum (strain Sg)).